The primary structure comprises 285 residues: Undecaprenyl-diphosphatase (285 aa).

7 helical membrane-spanning segments follow: residues 12–34, 49–69, 93–113, 120–140, 159–179, 234–254, and 263–283; these read IVIA…HAVI, IFLP…LVYF, IHIL…GGLL, LFGT…LLLL, LTYA…LPGI, VATI…AFLM, and WALS…FFIL.

Belongs to the UppP family.

It localises to the cell inner membrane. It carries out the reaction di-trans,octa-cis-undecaprenyl diphosphate + H2O = di-trans,octa-cis-undecaprenyl phosphate + phosphate + H(+). In terms of biological role, catalyzes the dephosphorylation of undecaprenyl diphosphate (UPP). Confers resistance to bacitracin. The chain is Undecaprenyl-diphosphatase from Gluconacetobacter diazotrophicus (strain ATCC 49037 / DSM 5601 / CCUG 37298 / CIP 103539 / LMG 7603 / PAl5).